Consider the following 235-residue polypeptide: MAWQGLAAEFLQVPAVTRAYTAACVLTTAAVQLELLSPFQLYFNPHLVFRKFQVWRLVTNFLFFGPLGFSFFFNMLFVFRYCRMLEEGSFRGRTADFVFMFLFGGVLMTLLGLLGSLFFLGQALMAMLVYVWSRRSPRVRVNFFGLLTFQAPFLPWALMGFSLLLGNSILVDLLGIAVGHIYYFLEDVFPNQPGGKRLLQTPGFLKLLLDAPAEDPNYLPLPEEQPGPHLPPPQQ.

At 1 to 22 the chain is on the cytoplasmic side; that stretch reads MAWQGLAAEFLQVPAVTRAYTA. Residues 23-43 traverse the membrane as a helical segment; it reads ACVLTTAAVQLELLSPFQLYF. Residues 44-58 are Lumenal-facing; that stretch reads NPHLVFRKFQVWRLV. The helical transmembrane segment at 59–79 threads the bilayer; it reads TNFLFFGPLGFSFFFNMLFVF. Topologically, residues 80–98 are cytoplasmic; sequence RYCRMLEEGSFRGRTADFV. A helical membrane pass occupies residues 99-119; the sequence is FMFLFGGVLMTLLGLLGSLFF. Residues 120–157 lie on the Lumenal side of the membrane; the sequence is LGQALMAMLVYVWSRRSPRVRVNFFGLLTFQAPFLPWA. The helical transmembrane segment at 158–178 threads the bilayer; that stretch reads LMGFSLLLGNSILVDLLGIAV. At 179–235 the chain is on the cytoplasmic side; sequence GHIYYFLEDVFPNQPGGKRLLQTPGFLKLLLDAPAEDPNYLPLPEEQPGPHLPPPQQ. The segment at 216–235 is disordered; sequence PNYLPLPEEQPGPHLPPPQQ. Over residues 223-235 the composition is skewed to pro residues; that stretch reads EEQPGPHLPPPQQ.

This sequence belongs to the derlin family. Forms homo- and heterooligomers with DERL2 and, to a lesser extent, with DERL1. Interacts with VCP and EDEM1. Interacts with SELENOK and SELENOS. Interacts with the signal recognition particle/SRP and the SRP receptor; in the process of endoplasmic reticulum stress-induced pre-emptive quality control. As to expression, unlike DERL1 and DERL2, restricted to several tissues. Expressed at high levels in placenta, pancreas, spleen and small intestine.

The protein localises to the endoplasmic reticulum membrane. Functionally, functional component of endoplasmic reticulum-associated degradation (ERAD) for misfolded lumenal glycoproteins, but not that of misfolded nonglycoproteins. May act by forming a channel that allows the retrotranslocation of misfolded glycoproteins into the cytosol where they are ubiquitinated and degraded by the proteasome. May mediate the interaction between VCP and the misfolded glycoproteins. May be involved in endoplasmic reticulum stress-induced pre-emptive quality control, a mechanism that selectively attenuates the translocation of newly synthesized proteins into the endoplasmic reticulum and reroutes them to the cytosol for proteasomal degradation. In Homo sapiens (Human), this protein is Derlin-3.